The primary structure comprises 149 residues: D-aminoacyl-tRNA deacylase (149 aa).

Positions 137–138 (GP) match the Gly-cisPro motif, important for rejection of L-amino acids motif.

The protein belongs to the DTD family. In terms of assembly, homodimer.

Its subcellular location is the cytoplasm. It carries out the reaction glycyl-tRNA(Ala) + H2O = tRNA(Ala) + glycine + H(+). The catalysed reaction is a D-aminoacyl-tRNA + H2O = a tRNA + a D-alpha-amino acid + H(+). An aminoacyl-tRNA editing enzyme that deacylates mischarged D-aminoacyl-tRNAs. Also deacylates mischarged glycyl-tRNA(Ala), protecting cells against glycine mischarging by AlaRS. Acts via tRNA-based rather than protein-based catalysis; rejects L-amino acids rather than detecting D-amino acids in the active site. By recycling D-aminoacyl-tRNA to D-amino acids and free tRNA molecules, this enzyme counteracts the toxicity associated with the formation of D-aminoacyl-tRNA entities in vivo and helps enforce protein L-homochirality. This chain is D-aminoacyl-tRNA deacylase, found in Desulfitobacterium hafniense (strain DSM 10664 / DCB-2).